The following is a 155-amino-acid chain: Small ribosomal subunit protein mS86 (155 aa).

A mitochondrion-targeting transit peptide spans 1–27 (MHYMGLFSRAGNIFRQPRALQASNAML). Residues 36–114 (SKIFVGGLSP…RIIGVHPADS (79 aa)) form the RRM domain.

This sequence belongs to the GR-RBP family. In terms of assembly, component of the mitochondrial ribosome small subunit.

Its subcellular location is the mitochondrion. Functionally, possibly has a role in RNA transcription or processing during stress. The chain is Small ribosomal subunit protein mS86 (RBG6) from Arabidopsis thaliana (Mouse-ear cress).